Consider the following 565-residue polypeptide: Heme/hemopexin transporter protein HuxB (565 aa).

The first 26 residues, 1 to 26, serve as a signal peptide directing secretion; the sequence is MKMRPRYSVIASAVSLGFVLSKSVMA. The 78-residue stretch at 73-150 folds into the POTRA domain; that stretch reads FPLKQVQILD…GTVKILLLKG (78 aa).

The protein belongs to the TPS (TC 1.B.20) family.

It is found in the cell outer membrane. In terms of biological role, likely functions in the release of soluble HxuA from the cell. Probable member of a two partner secretion pathway (TPS) in which it mediates the secretion of HuxA. In Haemophilus influenzae (strain ATCC 51907 / DSM 11121 / KW20 / Rd), this protein is Heme/hemopexin transporter protein HuxB (hxuB).